Consider the following 158-residue polypeptide: Transcription elongation factor GreA (158 aa).

This sequence belongs to the GreA/GreB family.

In terms of biological role, necessary for efficient RNA polymerase transcription elongation past template-encoded arresting sites. The arresting sites in DNA have the property of trapping a certain fraction of elongating RNA polymerases that pass through, resulting in locked ternary complexes. Cleavage of the nascent transcript by cleavage factors such as GreA or GreB allows the resumption of elongation from the new 3'terminus. GreA releases sequences of 2 to 3 nucleotides. The sequence is that of Transcription elongation factor GreA from Methylobacterium sp. (strain 4-46).